Here is a 673-residue protein sequence, read N- to C-terminus: Xaa-Pro aminopeptidase 2 (673 aa).

Positions 1–21 (MAQACWGCYPWLVLICACAWG) are cleaved as a signal peptide. N-linked (GlcNAc...) asparagine glycans are attached at residues N34, N48, and N64. R115 contributes to the substrate binding site. Residues N277, N290, and N294 are each glycosylated (N-linked (GlcNAc...) asparagine). Residue H429 coordinates substrate. Position 449 (D449) interacts with Mn(2+). Zn(2+) contacts are provided by D449, D460, and H523. Substrate-binding residues include H523, H532, and E554. The Zn(2+) site is built by E554 and E568. The GPI-anchor amidated alanine moiety is linked to residue A649. Residues 650-673 (RAAPTTSLGSLMTVSALAILGWSV) constitute a propeptide, removed in mature form.

It belongs to the peptidase M24B family. In terms of assembly, homotrimer. Requires Zn(2+) as cofactor. Post-translationally, N-glycosylated. As to expression, kidney.

The protein localises to the cell membrane. It carries out the reaction Release of any N-terminal amino acid, including proline, that is linked to proline, even from a dipeptide or tripeptide.. Its activity is regulated as follows. Inhibited by apstatin and the metal ion chelator EDTA. Potently inhibited by the converting enzyme inhibitors cilazaprilat; enalaprilat; L155,212; ramiprilat and YS 980. Also inhibited to a lesser extent by indolaprilat; quinaprilat; spiraprilat; captopril and zofenoprilat. In terms of biological role, membrane-bound metalloprotease which catalyzes the removal of a penultimate prolyl residue from the N-termini of peptides, such as Arg-Pro-Pro. May play a role in the metabolism of the vasodilator bradykinin. The protein is Xaa-Pro aminopeptidase 2 (XPNPEP2) of Sus scrofa (Pig).